A 177-amino-acid polypeptide reads, in one-letter code: Large ribosomal subunit protein uL6 (177 aa).

The protein belongs to the universal ribosomal protein uL6 family. As to quaternary structure, part of the 50S ribosomal subunit.

Functionally, this protein binds to the 23S rRNA, and is important in its secondary structure. It is located near the subunit interface in the base of the L7/L12 stalk, and near the tRNA binding site of the peptidyltransferase center. In Methanosarcina barkeri (strain Fusaro / DSM 804), this protein is Large ribosomal subunit protein uL6.